We begin with the raw amino-acid sequence, 320 residues long: Mitochondrial thiamine pyrophosphate carrier (320 aa).

Solcar repeat units lie at residues 13-106, 116-202, and 214-309; these read NTKL…LTEL, REFS…LKHL, and NENL…FCNV. A helical membrane pass occupies residues 19 to 39; the sequence is AVAGSVSGLVTRALISPFDVI. Ser51 carries the post-translational modification Phosphoserine. Helical transmembrane passes span 87–107, 122–142, 173–193, and 220–240; these read ILSIGYGAVQFLSFEMLTELV, FVCGGLAACTATLTVHPVDVL, VFYKGLAPTLIAIFPYAGLQF, and LLCGSGAGVISKTLTYPLDLF. The Substrate recognition signature appears at 241–246; that stretch reads KKRLQV. Residues 293–313 form a helical membrane-spanning segment; sequence ALSTGFMFFWYEFFCNVFHCM.

It belongs to the mitochondrial carrier (TC 2.A.29) family.

It is found in the mitochondrion membrane. The catalysed reaction is thiamine phosphate(out) + thiamine diphosphate(in) = thiamine phosphate(in) + thiamine diphosphate(out). Functionally, mitochondrial transporter mediating uptake of thiamine diphosphate into mitochondria. It is not clear if the antiporter activity is affected by the membrane potential or by the proton electrochemical gradient. This Macaca fascicularis (Crab-eating macaque) protein is Mitochondrial thiamine pyrophosphate carrier (SLC25A19).